A 373-amino-acid chain; its full sequence is Zn(2)-C6 fungal-type transcription factor afumD (373 aa).

The segment at 1–48 (MLDRSKMTSAIPDSNSSSSPRGHNQSERDSYNRKKRKGPRLAHRKSRT) is disordered. Residues 33–48 (RKKRKGPRLAHRKSRT) show a composition bias toward basic residues. The segment at residues 50-77 (CQRCRARRVKCDESRPVCRDCHRHGIPC) is a DNA-binding region (zn(2)-C6 fungal-type). Residues 86–110 (GAIPPSTGIQSRPLEPSPSDPSNDA) are disordered.

The protein localises to the nucleus. In terms of biological role, zn(2)-C6 fungal-type transcription factor; part of the gene cluster that mediates the biosynthesis fumihopaside A, a hopane-type glucoside that enhances the thermotolerance and UV resistance of N.fumigata. The polypeptide is Zn(2)-C6 fungal-type transcription factor afumD (Aspergillus fumigatus (strain CBS 144.89 / FGSC A1163 / CEA10) (Neosartorya fumigata)).